Consider the following 491-residue polypeptide: Lysine--tRNA ligase 1 (491 aa).

Residues E400 and E407 each coordinate Mg(2+).

Belongs to the class-II aminoacyl-tRNA synthetase family. In terms of assembly, homodimer. It depends on Mg(2+) as a cofactor.

It is found in the cytoplasm. It carries out the reaction tRNA(Lys) + L-lysine + ATP = L-lysyl-tRNA(Lys) + AMP + diphosphate. The chain is Lysine--tRNA ligase 1 from Mycoplasmopsis pulmonis (strain UAB CTIP) (Mycoplasma pulmonis).